The sequence spans 178 residues: Oligoribonuclease (178 aa).

An Exonuclease domain is found at 7 to 168 (LIWIDLEMTG…DDIRESIAEL (162 aa)). Residue Tyr128 is part of the active site.

Belongs to the oligoribonuclease family.

The protein localises to the cytoplasm. Its function is as follows. 3'-to-5' exoribonuclease specific for small oligoribonucleotides. The protein is Oligoribonuclease of Francisella tularensis subsp. novicida (strain U112).